A 158-amino-acid chain; its full sequence is Endoribonuclease YbeY (158 aa).

Positions 119, 123, and 129 each coordinate Zn(2+).

The protein belongs to the endoribonuclease YbeY family. Zn(2+) is required as a cofactor.

Its subcellular location is the cytoplasm. In terms of biological role, single strand-specific metallo-endoribonuclease involved in late-stage 70S ribosome quality control and in maturation of the 3' terminus of the 16S rRNA. This is Endoribonuclease YbeY from Chlamydia pneumoniae (Chlamydophila pneumoniae).